Consider the following 43-residue polypeptide: Photosystem II reaction center protein Y (43 aa).

A helical membrane pass occupies residues 8 to 26; it reads LFLVVAPILAAVSWAAFNI.

The protein belongs to the PsbY family. PSII is composed of 1 copy each of membrane proteins PsbA, PsbB, PsbC, PsbD, PsbE, PsbF, PsbH, PsbI, PsbJ, PsbK, PsbL, PsbM, PsbT, PsbX, PsbY, PsbZ, Psb30/Ycf12, peripheral proteins PsbO, CyanoQ (PsbQ), PsbU, PsbV and a large number of cofactors. It forms dimeric complexes.

The protein resides in the cellular thylakoid membrane. Functionally, loosely associated component of the core of photosystem II (PSII), it is not always seen in crystals. PSII is a light-driven water plastoquinone oxidoreductase, using light energy to abstract electrons from H(2)O, generating a proton gradient subsequently used for ATP formation. This is Photosystem II reaction center protein Y from Parasynechococcus marenigrum (strain WH8102).